The sequence spans 147 residues: Lipoprotein YafY (147 aa).

Positions 1–20 (MKRKTLPLLALVATTLFLIA) are cleaved as a signal peptide. Cysteine 21 carries N-palmitoyl cysteine lipidation. A lipid anchor (S-diacylglycerol cysteine) is attached at cysteine 21.

This sequence to E.coli YfjS.

The protein resides in the cell inner membrane. In terms of biological role, when overproduced strongly induces degP through the activation of the two-component envelope stress response system CpxA/CpxR. This Escherichia coli (strain K12) protein is Lipoprotein YafY (yafY).